The chain runs to 237 residues: (5-formylfuran-3-yl)methyl phosphate synthase (237 aa).

Catalysis depends on Lys-27, which acts as the Schiff-base intermediate with substrate. Lys-85 serves as the catalytic Proton acceptor.

It belongs to the MfnB family.

It catalyses the reaction 2 D-glyceraldehyde 3-phosphate = 4-(hydroxymethyl)-2-furancarboxaldehyde phosphate + phosphate + 2 H2O. It participates in cofactor biosynthesis; methanofuran biosynthesis. Its function is as follows. Catalyzes the formation of 4-(hydroxymethyl)-2-furancarboxaldehyde phosphate (4-HFC-P) from two molecules of glyceraldehyde-3-P (GA-3-P). The sequence is that of (5-formylfuran-3-yl)methyl phosphate synthase from Methanobrevibacter smithii (strain ATCC 35061 / DSM 861 / OCM 144 / PS).